A 640-amino-acid polypeptide reads, in one-letter code: Chaperone protein DnaK (640 aa).

Phosphothreonine; by autocatalysis is present on Thr-196. Disordered stretches follow at residues 487 to 526 (GKEQ…KEEI) and 593 to 640 (SHLY…GNDK). Basic and acidic residues predominate over residues 501–526 (TDAEISKMKEDAKEHAAEDQKRKEEI). The span at 595-613 (LYQSQGPESSQPETAAQSD) shows a compositional bias: polar residues. Over residues 630–640 (AEYEVIDGNDK) the composition is skewed to acidic residues.

The protein belongs to the heat shock protein 70 family.

Acts as a chaperone. In Pelodictyon phaeoclathratiforme (strain DSM 5477 / BU-1), this protein is Chaperone protein DnaK.